Consider the following 345-residue polypeptide: Putative pyridoxal reductase (345 aa).

Y60 functions as the Proton donor in the catalytic mechanism.

The protein belongs to the aldo/keto reductase family.

It is found in the cytoplasm. The protein resides in the nucleus. It carries out the reaction pyridoxine + NADP(+) = pyridoxal + NADPH + H(+). It participates in cofactor degradation; B6 vitamer degradation; pyridoxal from pyridoxine (dehydrogenase route): step 1/1. Functionally, catalyzes the reduction of pyridoxal (PL) with NADPH and oxidation of pyridoxine (PN) with NADP(+). This Saccharomyces cerevisiae (strain ATCC 204508 / S288c) (Baker's yeast) protein is Putative pyridoxal reductase.